The primary structure comprises 465 residues: 3-isopropylmalate dehydratase large subunit (465 aa).

[4Fe-4S] cluster-binding residues include Cys347, Cys407, and Cys410. The disordered stretch occupies residues 416-443 (DTLRPGERSASTSNRNFEGRQGPGGRTH).

This sequence belongs to the aconitase/IPM isomerase family. LeuC type 1 subfamily. Heterodimer of LeuC and LeuD. Requires [4Fe-4S] cluster as cofactor.

The catalysed reaction is (2R,3S)-3-isopropylmalate = (2S)-2-isopropylmalate. It participates in amino-acid biosynthesis; L-leucine biosynthesis; L-leucine from 3-methyl-2-oxobutanoate: step 2/4. Functionally, catalyzes the isomerization between 2-isopropylmalate and 3-isopropylmalate, via the formation of 2-isopropylmaleate. In Frankia alni (strain DSM 45986 / CECT 9034 / ACN14a), this protein is 3-isopropylmalate dehydratase large subunit.